A 389-amino-acid chain; its full sequence is MKLPALLTLGVAASTMVLAAIAPDQVPLNDAKKDELPEKFLIELAPGDTRWVTEDEKWELKREGLKFFDITAEVEQGFLPKVFPTPAVVNFPSELNRTAEVKQLASQLSKENMFNHLTNFTSFHTRYYKSTAGTQSATWLFEQVQQTVNNSLAVKYGAKVETFNHSWSQFSIIASIPGRTNKTVVVGAHQDSINMYLPTIMAAPGADDDGSGTVTILEALRVLLQSDAVAQGNATNTIEFHWYSAEEAGLLGSQAVFSKYKNENRDIKSMLQQDMTGYSQGTLDAGEQESVGVITDYVHSGLTEFIMKVVTGYCDIPFVLTKCGYACSDHASASRYGYPSAFVIESKFEHSSQRIHTMWDTVEYLDFDHMLQHAKMTLGLVYELAFAEL.

An N-terminal signal peptide occupies residues 1 to 19 (MKLPALLTLGVAASTMVLA). Residues 20–88 (AIAPDQVPLN…LPKVFPTPAV (69 aa)) constitute a propeptide that is removed on maturation. N-linked (GlcNAc...) asparagine glycans are attached at residues N96, N119, N149, N164, and N181. The Zn(2+) site is built by H189 and D208. Residue N233 is glycosylated (N-linked (GlcNAc...) asparagine). Zn(2+)-binding residues include E247 and D274. C323 and C327 form a disulfide bridge. Zn(2+) is bound at residue H356.

It belongs to the peptidase M28 family. M28E subfamily. Monomer. Zn(2+) serves as cofactor.

The protein localises to the secreted. In terms of biological role, extracellular aminopeptidase that allows assimilation of proteinaceous substrates. This Paracoccidioides brasiliensis (strain Pb18) protein is Leucine aminopeptidase 1 (LAP1).